We begin with the raw amino-acid sequence, 349 residues long: Protein Wnt-7b (349 aa).

Residues 1 to 24 form the signal peptide; sequence MHRNFRKWIFYVFLCFGVLYVKLG. 5 disulfides stabilise this stretch: C73/C84, C123/C131, C133/C152, C200/C214, and C202/C209. N83 and N127 each carry an N-linked (GlcNAc...) asparagine glycan. S206 carries the O-palmitoleoyl serine; by PORCN lipid modification. A disordered linker region spans residues 238-266; sequence VEVVRASRLRQPTFLRIKQLRSYQKPMET. 6 cysteine pairs are disulfide-bonded: C278–C309, C294–C304, C308–C348, C324–C339, C326–C336, and C331–C332. A glycan (N-linked (GlcNAc...) asparagine) is linked at N295.

Belongs to the Wnt family. Forms a soluble 1:1 complex with AFM; this prevents oligomerization and is required for prolonged biological activity. The complex with AFM may represent the physiological form in body fluids. Interacts with FZD1 and FZD10. Interacts with FZD4 (in vitro). Interacts with PORCN. Interacts with glypican GPC3. Interacts (via intrinsically disordered linker region) with RECK; interaction with RECK confers ligand selectivity for Wnt7 in brain endothelial cells and allows these cells to selectively respond to Wnt7. Palmitoleoylation is required for efficient binding to frizzled receptors. Depalmitoleoylation leads to Wnt signaling pathway inhibition. Moderately expressed in fetal brain, weakly expressed in fetal lung and kidney, and faintly expressed in adult brain, lung and prostate.

The protein localises to the secreted. Its subcellular location is the extracellular space. It localises to the extracellular matrix. Functionally, ligand for members of the frizzled family of seven transmembrane receptors that functions in the canonical Wnt/beta-catenin signaling pathway. Required for normal fusion of the chorion and the allantois during placenta development. Required for central nervous system (CNS) angiogenesis and blood-brain barrier regulation. This is Protein Wnt-7b (WNT7B) from Homo sapiens (Human).